The sequence spans 295 residues: (R)-3-hydroxydecanoyl-ACP:CoA transacylase (295 aa).

Residues 28–254 (NTIILINGSL…VIRDAGHFLD (227 aa)) form the AB hydrolase-1 domain.

It functions in the pathway polyester biosynthesis; polyhydroxyalkanoate biosynthesis. In terms of biological role, catalyzes the transfer of the acyl moiety from in vitro synthesized 3-hydroxydecanoyl-CoA to acyl carrier protein. The sequence is that of (R)-3-hydroxydecanoyl-ACP:CoA transacylase (phaG) from Ectopseudomonas oleovorans (Pseudomonas oleovorans).